We begin with the raw amino-acid sequence, 570 residues long: Molecular chaperone MKKS (570 aa).

192 to 199 provides a ligand contact to ATP; that stretch reads GHIILGKS. Positions 198-370 are substrate-binding apical domain; the sequence is KSLIVPLKGQ…FHLIPNEATI (173 aa).

The protein belongs to the TCP-1 chaperonin family. As to quaternary structure, component of a complex composed at least of MKKS, BBS10, BBS12, TCP1, CCT2, CCT3, CCT4, CCT5 and CCT8. Interacts with STUB1. Interacts with BBS2 (via coiled coil domain). Interacts with CCDC28B. Interacts with BBS12. Interacts with SMARCC1, a component of the SWI/SNF complexes; the interaction takes place predominantly in the cytoplasm and may modulate SMARCC1 location. Interacts with DLEC1. As to expression, widely expressed in adult and fetal tissues.

It is found in the cytoplasm. Its subcellular location is the cytoskeleton. The protein localises to the microtubule organizing center. It localises to the centrosome. The protein resides in the cytosol. It is found in the nucleus. In terms of biological role, probable molecular chaperone that assists the folding of proteins upon ATP hydrolysis. Plays a role in the assembly of BBSome, a complex involved in ciliogenesis regulating transports vesicles to the cilia. May play a role in protein processing in limb, cardiac and reproductive system development. May play a role in cytokinesis. In Homo sapiens (Human), this protein is Molecular chaperone MKKS.